The following is a 688-amino-acid chain: Potassium-transporting ATPase ATP-binding subunit (688 aa).

The next 4 membrane-spanning stretches (helical) occupy residues 35-55, 62-82, 219-239, and 260-280; these read VMFVVYVGSILTTILWVQALG, AGFILAITIWLWFTVLFANFA, IALTILLVALTIVFLGVIVTL, and VLIALLVCLIPTTIAGLLSAI. Asp-313 serves as the catalytic 4-aspartylphosphate intermediate. Residues Asp-350, Glu-354, 383-390, and Lys-401 each bind ATP; that span reads FSAHTRMS. Residues Asp-524 and Asp-528 each contribute to the Mg(2+) site. The next 3 membrane-spanning stretches (helical) occupy residues 594–614, 622–642, and 668–688; these read FAIIPAAFVTTYPQLAALNVM, AILSAVIFNALIIVFLIPLAL, and VIVPFIGIKLIDLAIAAVGLA.

Belongs to the cation transport ATPase (P-type) (TC 3.A.3) family. Type IA subfamily. In terms of assembly, the system is composed of three essential subunits: KdpA, KdpB and KdpC.

It is found in the cell inner membrane. The enzyme catalyses K(+)(out) + ATP + H2O = K(+)(in) + ADP + phosphate + H(+). Functionally, part of the high-affinity ATP-driven potassium transport (or Kdp) system, which catalyzes the hydrolysis of ATP coupled with the electrogenic transport of potassium into the cytoplasm. This subunit is responsible for energy coupling to the transport system and for the release of the potassium ions to the cytoplasm. The sequence is that of Potassium-transporting ATPase ATP-binding subunit from Dechloromonas aromatica (strain RCB).